A 998-amino-acid polypeptide reads, in one-letter code: MSRPASSNPPGRSPLRRGALTPTLIVVAVAVVGFIFFANVWTDVLWYQQLGFFEVYIRENLARIITFLIGFAMMFAAVFFAIRIAYRSRPVYAPDAEARDNLNRYQAQLEPVRRVVMIGLPILFGLFAGSAAASQWQKALLFFNQEPFGQADPLFNMDISFYLMSLPFLGFITGFLISIAVVAGIAGILTHYLYGSIRLMERGIFTSRAAQIHIAVTGALFLILLGVNFWLDRYTTVQSNSGRWAGALYTDVNAVVPTKAILAVAAGLVAILFIIAAIIGRWRLPVIGTAMLVITAILAGGVYPWVIQQFQVRPSENTLEKEFIDRNIKMTRAAYGLDKIDVSAYNATTTATTGALAADAQTTANIRLLDPNLISSAFAQLEQYRPYYQFPQTLNVDRYMVDGKVQDTVIAVRELNPDGLSANQQTWVNRHIVYTHGYGVVAAKGNKFTADGKPEFLQSGIPSNGVLGNDTSYEPRIYFGENSPEYSIVGAPDGAPNREQDRPAGREGGGETQYTFSGNGGPNVGNWLNRILYSIKFQSSDLLLSDGVNAESQILYERNPRERVEKLAPYLTVDGNAYPAVVDGRVKWIVDGYTTSQYFPYSQPQQLQNATVDSQTSAGRTVALPNSSVNYIRNSVKATVDAYDGSVNLYAWDDQDPILKAWQKVFPTVIKPYSEMSGDLMSHVRYPEDLFKVQRELLGRYHVTDPDSFYQNNDAWSVPNDPTVSEAVKQPPFYMSLQMPDQEKPAFQLTSSFIPQTVNGSARNILYGFLAADSDAGNVKGVKGESYGKLRLLELPTDTQVPGPGQAQNKFNSDPTVSQALNLLRQGASDVLNGNLLTLPVGGGLLYVQPVYLKSTGETSYPTLQRVLVAFGDKIGFAPTLDEALDQLFGGDSGATAGDSDNNGQTPTSPPGTTPPPAGPTDAKADLKAALDEANKAIQDGQAALAKGDFAGYGAQQTKLSEALKKAIDAQARLDATPAPTATPGATPSATPSPSPSS.

Transmembrane regions (helical) follow at residues 18–38 (GALT…IFFA), 64–84 (IITF…AIRI), 115–135 (VVMI…AASQ), 168–188 (FLGF…IAGI), 211–231 (QIHI…NFWL), 260–280 (AILA…AIIG), and 287–307 (IGTA…PWVI). Disordered stretches follow at residues 490-518 (GAPD…TFSG), 888-923 (LFGG…PTDA), and 971-998 (QARL…SPSS). The segment covering 496 to 509 (PNREQDRPAGREGG) has biased composition (basic and acidic residues). Pro residues predominate over residues 908 to 919 (TSPPGTTPPPAG). Residues 976–990 (ATPAPTATPGATPSA) are compositionally biased toward low complexity.

Belongs to the UPF0182 family.

The protein localises to the cell membrane. The chain is UPF0182 protein AAur_2732 from Paenarthrobacter aurescens (strain TC1).